The chain runs to 411 residues: Argininosuccinate synthase (411 aa).

Residues 15-23 (AYSGGLDTS) and Ala-42 each bind ATP. Positions 93 and 98 each coordinate L-citrulline. Gly-123 is an ATP binding site. The L-aspartate site is built by Thr-125, Asn-129, and Asp-130. Asn-129 provides a ligand contact to L-citrulline. L-citrulline contacts are provided by Arg-133, Ser-185, Ser-194, Glu-270, and Tyr-282.

It belongs to the argininosuccinate synthase family. Type 1 subfamily. Homotetramer.

It localises to the cytoplasm. It catalyses the reaction L-citrulline + L-aspartate + ATP = 2-(N(omega)-L-arginino)succinate + AMP + diphosphate + H(+). It functions in the pathway amino-acid biosynthesis; L-arginine biosynthesis; L-arginine from L-ornithine and carbamoyl phosphate: step 2/3. This is Argininosuccinate synthase from Psychrobacter sp. (strain PRwf-1).